A 149-amino-acid polypeptide reads, in one-letter code: D-aminoacyl-tRNA deacylase (149 aa).

A Gly-cisPro motif, important for rejection of L-amino acids motif is present at residues 137-138 (GP).

Belongs to the DTD family. Homodimer.

The protein localises to the cytoplasm. It catalyses the reaction glycyl-tRNA(Ala) + H2O = tRNA(Ala) + glycine + H(+). The catalysed reaction is a D-aminoacyl-tRNA + H2O = a tRNA + a D-alpha-amino acid + H(+). An aminoacyl-tRNA editing enzyme that deacylates mischarged D-aminoacyl-tRNAs. Also deacylates mischarged glycyl-tRNA(Ala), protecting cells against glycine mischarging by AlaRS. Acts via tRNA-based rather than protein-based catalysis; rejects L-amino acids rather than detecting D-amino acids in the active site. By recycling D-aminoacyl-tRNA to D-amino acids and free tRNA molecules, this enzyme counteracts the toxicity associated with the formation of D-aminoacyl-tRNA entities in vivo and helps enforce protein L-homochirality. In Thermoanaerobacter sp. (strain X514), this protein is D-aminoacyl-tRNA deacylase.